Here is a 317-residue protein sequence, read N- to C-terminus: Ribonuclease H2 subunit A (317 aa).

Positions 43 to 270 (PCCLGVDEAG…AKDMLETKGG (228 aa)) constitute an RNase H type-2 domain. A divalent metal cation-binding residues include Asp-49, Glu-50, and Asp-166.

Belongs to the RNase HII family. Eukaryotic subfamily. It depends on Mn(2+) as a cofactor. Mg(2+) serves as cofactor.

The catalysed reaction is Endonucleolytic cleavage to 5'-phosphomonoester.. Endonuclease that specifically degrades the RNA of RNA-DNA hybrids. Participates in DNA replication. The protein is Ribonuclease H2 subunit A (rnh-201) of Neurospora crassa (strain ATCC 24698 / 74-OR23-1A / CBS 708.71 / DSM 1257 / FGSC 987).